The chain runs to 118 residues: ATP synthase subunit gamma, chloroplastic (118 aa).

Residues C30 and C36 are joined by a disulfide bond.

This sequence belongs to the ATPase gamma chain family. F-type ATPases have 2 components, CF(1) - the catalytic core - and CF(0) - the membrane proton channel. CF(1) has five subunits: alpha(3), beta(3), gamma(1), delta(1), epsilon(1). CF(0) has four main subunits: a, b, b' and c.

Its subcellular location is the plastid. It localises to the chloroplast thylakoid membrane. Produces ATP from ADP in the presence of a proton gradient across the membrane. The gamma chain is believed to be important in regulating ATPase activity and the flow of protons through the CF(0) complex. Its function is as follows. Inceptin is a proteolytic fragment produced by insect larvae that previously ingested the protein. This peptide mediate plant perception of herbivory through the induction of volatile, phenylpropanoid and protease inhibitor defenses such as ethylene, jasmonic acid and salicylic acid for example. In Vigna unguiculata (Cowpea), this protein is ATP synthase subunit gamma, chloroplastic.